A 711-amino-acid polypeptide reads, in one-letter code: Mitochondrial intermediate peptidase (711 aa).

A mitochondrion-targeting transit peptide spans 1–33 (MLLAAGARYARRLCGRGAAAALQGRTGRSCARD). At Lys-124 the chain carries N6-acetyllysine. His-493 is a binding site for Zn(2+). Residue Glu-494 is part of the active site. Residues His-497 and His-500 each coordinate Zn(2+).

Belongs to the peptidase M3 family. Monomer. Zn(2+) is required as a cofactor.

It is found in the mitochondrion matrix. It carries out the reaction Release of an N-terminal octapeptide as second stage of processing of some proteins imported into the mitochondrion.. With respect to regulation, activity is divalent cation-dependent. It is stimulated by manganese, magnesium or calcium ions and reversibly inhibited by zinc, cobalt and iron. In terms of biological role, cleaves proteins, imported into the mitochondrion, to their mature size. The sequence is that of Mitochondrial intermediate peptidase (Mipep) from Mus musculus (Mouse).